Consider the following 162-residue polypeptide: uncharacterized protein (162 aa).

Residues 129–161 adopt a coiled-coil conformation; the sequence is DLNAVLKNLKEVEKKSLKISKEELKKKLDQILG.

This is an uncharacterized protein from Aquifex aeolicus (strain VF5).